The sequence spans 104 residues: Cysteine-rich and transmembrane domain-containing protein 1 (104 aa).

2 stretches are compositionally biased toward pro residues: residues 1-25 and 33-47; these read MNPENPPPYPGPGPTAPYPPYPQQP and GAPPPQGYPYPPPQG. A disordered region spans residues 1-47; the sequence is MNPENPPPYPGPGPTAPYPPYPQQPMGPMGPMGAPPPQGYPYPPPQG. Residues 81–98 form a helical membrane-spanning segment; that stretch reads LGPSTCLTACWTALCCCC.

It belongs to the CYSTM1 family.

The protein resides in the membrane. This is Cysteine-rich and transmembrane domain-containing protein 1 (Cystm1) from Mus musculus (Mouse).